The primary structure comprises 88 residues: Large ribosomal subunit protein uL23c (88 aa).

The protein belongs to the universal ribosomal protein uL23 family. In terms of assembly, part of the 50S ribosomal subunit.

It localises to the plastid. Its subcellular location is the chloroplast. Functionally, binds to 23S rRNA. The polypeptide is Large ribosomal subunit protein uL23c (rpl23) (Spirogyra maxima (Green alga)).